A 191-amino-acid chain; its full sequence is FMN-dependent NADH:quinone oxidoreductase 1 (191 aa).

Residues S10 and S16 to S18 each bind FMN.

This sequence belongs to the azoreductase type 1 family. In terms of assembly, homodimer. The cofactor is FMN.

The enzyme catalyses 2 a quinone + NADH + H(+) = 2 a 1,4-benzosemiquinone + NAD(+). It catalyses the reaction N,N-dimethyl-1,4-phenylenediamine + anthranilate + 2 NAD(+) = 2-(4-dimethylaminophenyl)diazenylbenzoate + 2 NADH + 2 H(+). Quinone reductase that provides resistance to thiol-specific stress caused by electrophilic quinones. In terms of biological role, also exhibits azoreductase activity. Catalyzes the reductive cleavage of the azo bond in aromatic azo compounds to the corresponding amines. The protein is FMN-dependent NADH:quinone oxidoreductase 1 of Jannaschia sp. (strain CCS1).